We begin with the raw amino-acid sequence, 393 residues long: Lipid-A-disaccharide synthase (393 aa).

This sequence belongs to the LpxB family.

It carries out the reaction a lipid X + a UDP-2-N,3-O-bis[(3R)-3-hydroxyacyl]-alpha-D-glucosamine = a lipid A disaccharide + UDP + H(+). The protein operates within bacterial outer membrane biogenesis; LPS lipid A biosynthesis. In terms of biological role, condensation of UDP-2,3-diacylglucosamine and 2,3-diacylglucosamine-1-phosphate to form lipid A disaccharide, a precursor of lipid A, a phosphorylated glycolipid that anchors the lipopolysaccharide to the outer membrane of the cell. In Rhodopseudomonas palustris (strain HaA2), this protein is Lipid-A-disaccharide synthase.